Reading from the N-terminus, the 152-residue chain is 3-hydroxyacyl-[acyl-carrier-protein] dehydratase FabZ (152 aa).

His-57 is a catalytic residue.

This sequence belongs to the thioester dehydratase family. FabZ subfamily.

The protein resides in the cytoplasm. It carries out the reaction a (3R)-hydroxyacyl-[ACP] = a (2E)-enoyl-[ACP] + H2O. In terms of biological role, involved in unsaturated fatty acids biosynthesis. Catalyzes the dehydration of short chain beta-hydroxyacyl-ACPs and long chain saturated and unsaturated beta-hydroxyacyl-ACPs. The polypeptide is 3-hydroxyacyl-[acyl-carrier-protein] dehydratase FabZ (Pasteurella multocida (strain Pm70)).